The primary structure comprises 155 residues: Regulatory protein RecX (155 aa).

Belongs to the RecX family.

Its subcellular location is the cytoplasm. In terms of biological role, modulates RecA activity. This chain is Regulatory protein RecX, found in Pseudomonas fluorescens (strain ATCC BAA-477 / NRRL B-23932 / Pf-5).